We begin with the raw amino-acid sequence, 242 residues long: Small ribosomal subunit protein uS3 (242 aa).

In terms of domain architecture, KH type-2 spans 39-110 (IRKFIHKKYG…QVRINVVEVE (72 aa)). The disordered stretch occupies residues 216-242 (QPMPVGAAPRRRASRRPQQFEDRSNEG). Residues 233–242 (QQFEDRSNEG) are compositionally biased toward basic and acidic residues.

The protein belongs to the universal ribosomal protein uS3 family. As to quaternary structure, part of the 30S ribosomal subunit. Forms a tight complex with proteins S10 and S14.

In terms of biological role, binds the lower part of the 30S subunit head. Binds mRNA in the 70S ribosome, positioning it for translation. This chain is Small ribosomal subunit protein uS3, found in Synechococcus sp. (strain CC9605).